Here is a 206-residue protein sequence, read N- to C-terminus: Small ribosomal subunit protein uS4 (206 aa).

An S4 RNA-binding domain is found at 96–156; the sequence is TRLDNVVYRM…EKSKTQARII (61 aa).

Belongs to the universal ribosomal protein uS4 family. As to quaternary structure, part of the 30S ribosomal subunit. Contacts protein S5. The interaction surface between S4 and S5 is involved in control of translational fidelity.

Functionally, one of the primary rRNA binding proteins, it binds directly to 16S rRNA where it nucleates assembly of the body of the 30S subunit. In terms of biological role, with S5 and S12 plays an important role in translational accuracy. The polypeptide is Small ribosomal subunit protein uS4 (Colwellia psychrerythraea (strain 34H / ATCC BAA-681) (Vibrio psychroerythus)).